Consider the following 139-residue polypeptide: Tol-Pal system protein TolR (139 aa).

Residues 15-35 (IVPFLDVLLVLVLIFMATAPI) traverse the membrane as a helical segment.

It belongs to the ExbD/TolR family. In terms of assembly, the Tol-Pal system is composed of five core proteins: the inner membrane proteins TolA, TolQ and TolR, the periplasmic protein TolB and the outer membrane protein Pal. They form a network linking the inner and outer membranes and the peptidoglycan layer.

The protein resides in the cell inner membrane. Part of the Tol-Pal system, which plays a role in outer membrane invagination during cell division and is important for maintaining outer membrane integrity. This Haemophilus influenzae (strain ATCC 51907 / DSM 11121 / KW20 / Rd) protein is Tol-Pal system protein TolR.